The chain runs to 212 residues: Adenylate kinase (212 aa).

An ATP-binding site is contributed by 10–15 (GAGKGT). The segment at 30 to 59 (STGDMFRAAMANQTEMGTLAKSFIDKGELV) is NMP. AMP is bound by residues Thr-31, Arg-36, 57 to 59 (ELV), 86 to 89 (GYPR), and Gln-93. An LID region spans residues 127–159 (GRIINRKTGETYHKVFNPPADYNEDDYYQREDD). ATP contacts are provided by residues Arg-128 and 137 to 138 (TY). Residues Arg-156 and Arg-167 each contribute to the AMP site. Gln-195 is an ATP binding site.

This sequence belongs to the adenylate kinase family. In terms of assembly, monomer.

It is found in the cytoplasm. It carries out the reaction AMP + ATP = 2 ADP. Its pathway is purine metabolism; AMP biosynthesis via salvage pathway; AMP from ADP: step 1/1. Functionally, catalyzes the reversible transfer of the terminal phosphate group between ATP and AMP. Plays an important role in cellular energy homeostasis and in adenine nucleotide metabolism. The polypeptide is Adenylate kinase (Streptococcus mutans serotype c (strain ATCC 700610 / UA159)).